A 216-amino-acid polypeptide reads, in one-letter code: Dephospho-CoA kinase (216 aa).

The 199-residue stretch at 18–216 (IIGVIGPPCS…SELASVLQSK (199 aa)) folds into the DPCK domain. Residue 26–31 (CSGKST) coordinates ATP.

Belongs to the CoaE family.

The protein resides in the cytoplasm. It catalyses the reaction 3'-dephospho-CoA + ATP = ADP + CoA + H(+). Its pathway is cofactor biosynthesis; coenzyme A biosynthesis; CoA from (R)-pantothenate: step 5/5. Its function is as follows. Catalyzes the phosphorylation of the 3'-hydroxyl group of dephosphocoenzyme A to form coenzyme A. The polypeptide is Dephospho-CoA kinase (Rhodopirellula baltica (strain DSM 10527 / NCIMB 13988 / SH1)).